Reading from the N-terminus, the 272-residue chain is TLC domain-containing protein 4 C (272 aa).

Transmembrane regions (helical) follow at residues 16–36 (FSNS…FIIY), 71–91 (VSMI…VESF), 103–123 (SLLM…IICY), 128–148 (LVGT…IYVA), 155–175 (CFVP…PLNM), 196–216 (FVIT…IYLV), and 233–253 (VFIT…FLLI). Residues 61-261 (KKKLEWDQRV…LIKKLYQTYL (201 aa)) enclose the TLC domain.

This sequence belongs to the TLCD4 family.

The protein localises to the membrane. This chain is TLC domain-containing protein 4 C (tlcd4c), found in Dictyostelium discoideum (Social amoeba).